The sequence spans 372 residues: Erythronate-4-phosphate dehydrogenase (372 aa).

The substrate site is built by Ser-45 and Thr-66. Residue Asp-146 coordinates NAD(+). The active site involves Arg-209. Residue Asp-233 participates in NAD(+) binding. Residue Glu-238 is part of the active site. The Proton donor role is filled by His-255. Gly-258 is an NAD(+) binding site. Tyr-259 is a substrate binding site.

The protein belongs to the D-isomer specific 2-hydroxyacid dehydrogenase family. PdxB subfamily. Homodimer.

Its subcellular location is the cytoplasm. It catalyses the reaction 4-phospho-D-erythronate + NAD(+) = (R)-3-hydroxy-2-oxo-4-phosphooxybutanoate + NADH + H(+). It functions in the pathway cofactor biosynthesis; pyridoxine 5'-phosphate biosynthesis; pyridoxine 5'-phosphate from D-erythrose 4-phosphate: step 2/5. Catalyzes the oxidation of erythronate-4-phosphate to 3-hydroxy-2-oxo-4-phosphonooxybutanoate. In Blochmanniella floridana, this protein is Erythronate-4-phosphate dehydrogenase.